Reading from the N-terminus, the 372-residue chain is Invasion protein InvE (372 aa).

The span at 1–19 (MIPGSTSGISFSRILSRQT) shows a compositional bias: polar residues. Residues 1-46 (MIPGSTSGISFSRILSRQTSHQDATQHTDAQQAEIQQAAEDSSPGA) form a disordered region. A compositionally biased stretch (low complexity) spans 21–40 (HQDATQHTDAQQAEIQQAAE).

It localises to the cell membrane. Functionally, involved in the triggering of intracellular events that lead to microbial internalization. These events include increase in calcium level, redistribution of actin microfilaments, and changes in the normal structure of the microvilli. Encoded within the type III secretion system (SPI-1 T3SS), it is essential for the translocation of protein effectors into host cells. Forms a complex with SipB and SipC in the presence of their chaperone SicA. Positively regulates the secretion of SPI-1 T3SS effector proteins SipB, SipC and SipD and negatively influences the secretion of SipA, SopA and SptP. In Salmonella typhimurium (strain LT2 / SGSC1412 / ATCC 700720), this protein is Invasion protein InvE (invE).